Consider the following 827-residue polypeptide: Lon protease (827 aa).

The Lon N-terminal domain occupies 38 to 233; sequence LTLLASKYNV…VLLKYLLKDL (196 aa). Residue 384 to 391 coordinates ATP; sequence GPPGVGKT. Residues 619–800 form the Lon proteolytic domain; it reads THLPGVAIGL…EEVIQLALQP (182 aa). Catalysis depends on residues Ser706 and Lys749.

It belongs to the peptidase S16 family. As to quaternary structure, homohexamer. Organized in a ring with a central cavity.

The protein resides in the cytoplasm. The enzyme catalyses Hydrolysis of proteins in presence of ATP.. Its function is as follows. ATP-dependent serine protease that mediates the selective degradation of mutant and abnormal proteins as well as certain short-lived regulatory proteins. Required for cellular homeostasis and for survival from DNA damage and developmental changes induced by stress. Degrades polypeptides processively to yield small peptide fragments that are 5 to 10 amino acids long. Binds to DNA in a double-stranded, site-specific manner. The polypeptide is Lon protease (Amoebophilus asiaticus (strain 5a2)).